A 253-amino-acid polypeptide reads, in one-letter code: CTP:phosphoglutamine cytidylyltransferase (253 aa).

The enzyme catalyses N(5)-phospho-L-glutamine + CTP + H(+) = N(5)-(cytidine 5'-diphosphoramidyl)-L-glutamine + diphosphate. Its pathway is capsule biogenesis; capsule polysaccharide biosynthesis. Functionally, involved in the biosynthesis of the O-methyl phosphoramidate (MeOPN) group found on the capsular polysaccharide (CPS) of C.jejuni. Catalyzes the formation of CDP-L-glutamine from CTP and L-glutamine phosphate. In the presence of MnCTP, catalyzes the displacement of pyrophosphate from CTP using phosphoramidate, methyl phosphate, methyl phosphonate, phosphate, arsenate, ethanolamine phosphate, (R/S)-glycerol-1-phosphate, glycerol-2-phosphate, serinol phosphate, L-serine phosphate and 3-phospho-D-glycerate as substrate in addition to L-glutamine phosphate. In Campylobacter jejuni subsp. jejuni serotype O:2 (strain ATCC 700819 / NCTC 11168), this protein is CTP:phosphoglutamine cytidylyltransferase.